A 180-amino-acid polypeptide reads, in one-letter code: NADH-quinone oxidoreductase subunit I (180 aa).

4Fe-4S ferredoxin-type domains follow at residues 50-80 (LTRN…LQKS) and 90-119 (KFFR…LMPD). [4Fe-4S] cluster contacts are provided by Cys-60, Cys-63, Cys-66, Cys-70, Cys-99, Cys-102, Cys-105, and Cys-109.

The protein belongs to the complex I 23 kDa subunit family. In terms of assembly, NDH-1 is composed of 13 different subunits. Subunits NuoA, H, J, K, L, M, N constitute the membrane sector of the complex. It depends on [4Fe-4S] cluster as a cofactor.

It is found in the cell membrane. The catalysed reaction is a quinone + NADH + 5 H(+)(in) = a quinol + NAD(+) + 4 H(+)(out). Its function is as follows. NDH-1 shuttles electrons from NADH, via FMN and iron-sulfur (Fe-S) centers, to quinones in the respiratory chain. The immediate electron acceptor for the enzyme in this species is believed to be ubiquinone. Couples the redox reaction to proton translocation (for every two electrons transferred, four hydrogen ions are translocated across the cytoplasmic membrane), and thus conserves the redox energy in a proton gradient. This is NADH-quinone oxidoreductase subunit I from Buchnera aphidicola subsp. Acyrthosiphon pisum (strain APS) (Acyrthosiphon pisum symbiotic bacterium).